The chain runs to 347 residues: D-alanine--D-alanine ligase (347 aa).

Positions 131-333 (KRVLESAGIA…YPELIERLVD (203 aa)) constitute an ATP-grasp domain. 161–216 (EEKLAYPVFTKPSNMGSSVGISKSENQEELRQALKLAFRYDSRVLVEQGVNAREIE) serves as a coordination point for ATP. The Mg(2+) site is built by aspartate 287, glutamate 300, and asparagine 302.

Belongs to the D-alanine--D-alanine ligase family. Mg(2+) is required as a cofactor. Mn(2+) serves as cofactor.

The protein resides in the cytoplasm. It carries out the reaction 2 D-alanine + ATP = D-alanyl-D-alanine + ADP + phosphate + H(+). It functions in the pathway cell wall biogenesis; peptidoglycan biosynthesis. Functionally, cell wall formation. The chain is D-alanine--D-alanine ligase from Streptococcus pneumoniae (strain ATCC BAA-255 / R6).